An 816-amino-acid polypeptide reads, in one-letter code: MLSWRHLVFWAMLVMATLSAARPAPTLPEQVSPKAKVEVESYSAHHGDLLQLRCRLRDDVHSINWEKDGVQLAETNRTRITGAEVEVRDAVQEDSGLYACMTHRPSGTETTFFAVNVSDRIPSVEDDDDDDEKSSSEEKEAENSKPNPVAPFWAHPEKMEKKLHAVPAAKTVKFRCPAGGTPSPTLRWLKNGKEFKPDHRIGGYKVRYQTWSIIMDSVVPSDKGPYTCLVENNYGSINHTYQLDVVERSPHRPILQAGLPANQTVPVGSNVDFVCKVYSDPQPHIQWLKHVTVNGSKYGSDGLPLVQVLKAAGVNTTDKEMEVLHLRNVSFEDAWEYTCLAGNSIGISHHSAWLTVVEAISENPVIMTSPLYLEIIIYCTGAFLISCMLVTVIIYKMKNTTKKTDFNSQPAVHKLAKSFPLQRQVSADSSSSMSSGVMLVRPSRLSSSGSPMLTGVSEYELPEDPRWEFSRDRLILGKPLGEGCFGQVVMGEAIGLDKEKPNRVTKVAVKMLKSDATEKDLSDLISEMEMMKMIGKHKNIINLLGACTQDGPLYVIVEYASKGNLREYLRARRPPGMEYCYNPIHVSKDMLSFKDLVSCAYQVARGMEYLASKKCIHRDLAARNVLVTEDSVMKIADFGLARDIHHIDYYKKTTNGRLPVKWMAPEALFDRIYTHQSDVWSFGVLLWEIFTLGGSPYPGVPVEELFKLLKEGHRMDKPGNCTNELYMMMRDCWHAVPSQRPTFKQLVEDLDRIVAMTSNQEYLDLSMPVDQYSPGFPDTRSSTCSSGEDSVFSHDPLPDEPCLPKYQHANGGLKKR.

The first 23 residues, 1-23, serve as a signal peptide directing secretion; the sequence is MLSWRHLVFWAMLVMATLSAARP. The Extracellular segment spans residues 24 to 374; that stretch reads APTLPEQVSP…VIMTSPLYLE (351 aa). The 94-residue stretch at 25–118 folds into the Ig-like C2-type 1 domain; the sequence is PTLPEQVSPK…ETTFFAVNVS (94 aa). Cys-54 and Cys-100 are oxidised to a cystine. 2 N-linked (GlcNAc...) asparagine glycosylation sites follow: Asn-76 and Asn-116. The disordered stretch occupies residues 118-152; the sequence is SDRIPSVEDDDDDDEKSSSEEKEAENSKPNPVAPF. Residues 133 to 143 are compositionally biased toward basic and acidic residues; it reads KSSSEEKEAEN. 2 consecutive Ig-like C2-type domains span residues 156-244 and 253-355; these read PEKM…YQLD and PILQ…AWLT. The cysteines at positions 176 and 228 are disulfide-linked. Residues Asn-238, Asn-262, Asn-294, Asn-315, and Asn-328 are each glycosylated (N-linked (GlcNAc...) asparagine). Cys-275 and Cys-339 are joined by a disulfide. The helical transmembrane segment at 375 to 395 threads the bilayer; that stretch reads IIIYCTGAFLISCMLVTVIIY. Residues 396–816 are Cytoplasmic-facing; that stretch reads KMKNTTKKTD…QHANGGLKKR (421 aa). The residue at position 459 (Tyr-459) is a Phosphotyrosine; by autocatalysis. Positions 474–763 constitute a Protein kinase domain; that stretch reads LILGKPLGEG…VAMTSNQEYL (290 aa). Residues 480-486, Lys-510, 558-560, and Asn-564 each bind ATP; these read LGEGCFG and EYA. Residues Tyr-579 and Tyr-581 each carry the phosphotyrosine; by autocatalysis modification. The Proton acceptor role is filled by Asp-619. Arg-623 and Asp-637 together coordinate ATP. Phosphotyrosine; by autocatalysis is present on residues Tyr-649, Tyr-650, Tyr-726, and Tyr-762. The disordered stretch occupies residues 776–816; it reads FPDTRSSTCSSGEDSVFSHDPLPDEPCLPKYQHANGGLKKR. The segment covering 779–788 has biased composition (polar residues); sequence TRSSTCSSGE.

It belongs to the protein kinase superfamily. Tyr protein kinase family. Fibroblast growth factor receptor subfamily. As to quaternary structure, monomer. Homodimer after ligand binding. In terms of processing, autophosphorylated. Binding of FGF family members together with heparan sulfate proteoglycan or heparin promotes receptor dimerization and autophosphorylation on tyrosine residues. Autophosphorylation occurs in trans between the two FGFR molecules present in the dimer and proceeds in a highly ordered manner. Phosphotyrosine residues provide docking sites for interacting proteins and so are crucial for FGFR1 function and its regulation. Ubiquitinated. FGFR1 is rapidly ubiquitinated after autophosphorylation, leading to internalization and degradation. Post-translationally, N-glycosylated in the endoplasmic reticulum. The N-glycan chains undergo further maturation to an Endo H-resistant form in the Golgi apparatus.

The protein resides in the cell membrane. It is found in the nucleus. It localises to the cytoplasm. Its subcellular location is the cytosol. The protein localises to the cytoplasmic vesicle. It carries out the reaction L-tyrosyl-[protein] + ATP = O-phospho-L-tyrosyl-[protein] + ADP + H(+). With respect to regulation, present in an inactive conformation in the absence of bound ligand. Ligand binding leads to dimerization and activation by sequential autophosphorylation on tyrosine residues. In terms of biological role, tyrosine-protein kinase that acts as a cell-surface receptor for fibroblast growth factors and plays an essential role in the regulation of embryonic development, cell proliferation, differentiation and migration. Required for normal mesoderm patterning and normal skeletogenesis. Phosphorylates PLCG1, FRS2, GAB1 and SHB. Ligand binding leads to the activation of several signaling cascades. Activation of PLCG1 leads to the production of the cellular signaling molecules diacylglycerol and inositol-1,4,5-trisphosphate. Phosphorylation of FRS2 triggers recruitment of GRB2, GAB1, PIK3R1 and SOS1, and mediates activation of RAS, MAPK1/ERK2, MAPK3/ERK1 and the MAP kinase signaling pathway, as well as of the AKT1 signaling pathway. Promotes phosphorylation of SHC1, STAT1 and PTPN11/SHP2. In the nucleus, enhances RPS6KA1 and CREB1 activity and contributes to the regulation of transcription. FGFR1 signaling is down-regulated by ubiquitination, internalization and degradation. The chain is Fibroblast growth factor receptor 1 (FGFR1) from Pleurodeles waltl (Iberian ribbed newt).